Reading from the N-terminus, the 142-residue chain is Large ribosomal subunit protein uL13 (142 aa).

Belongs to the universal ribosomal protein uL13 family. In terms of assembly, part of the 50S ribosomal subunit.

In terms of biological role, this protein is one of the early assembly proteins of the 50S ribosomal subunit, although it is not seen to bind rRNA by itself. It is important during the early stages of 50S assembly. The polypeptide is Large ribosomal subunit protein uL13 (Cronobacter sakazakii (strain ATCC BAA-894) (Enterobacter sakazakii)).